Reading from the N-terminus, the 279-residue chain is Protease HtpX homolog (279 aa).

2 helical membrane passes run 4 to 24 and 34 to 54; these read IFLF…VLAV and GSLL…SLLM. Position 140 (His140) interacts with Zn(2+). Glu141 is a catalytic residue. His144 contacts Zn(2+). The next 2 membrane-spanning stretches (helical) occupy residues 155–175 and 189–209; these read LIQG…ANLI and FLVS…IVMW. Zn(2+) is bound at residue Glu215.

This sequence belongs to the peptidase M48B family. Requires Zn(2+) as cofactor.

It localises to the cell inner membrane. The chain is Protease HtpX homolog from Neisseria gonorrhoeae (strain ATCC 700825 / FA 1090).